The primary structure comprises 375 residues: Succinyl-diaminopimelate desuccinylase (375 aa).

His66 serves as a coordination point for Zn(2+). Residue Asp68 is part of the active site. Position 99 (Asp99) interacts with Zn(2+). Glu133 (proton acceptor) is an active-site residue. 3 residues coordinate Zn(2+): Glu134, Glu162, and His348.

Belongs to the peptidase M20A family. DapE subfamily. Homodimer. The cofactor is Zn(2+). It depends on Co(2+) as a cofactor.

It catalyses the reaction N-succinyl-(2S,6S)-2,6-diaminopimelate + H2O = (2S,6S)-2,6-diaminopimelate + succinate. It functions in the pathway amino-acid biosynthesis; L-lysine biosynthesis via DAP pathway; LL-2,6-diaminopimelate from (S)-tetrahydrodipicolinate (succinylase route): step 3/3. Functionally, catalyzes the hydrolysis of N-succinyl-L,L-diaminopimelic acid (SDAP), forming succinate and LL-2,6-diaminopimelate (DAP), an intermediate involved in the bacterial biosynthesis of lysine and meso-diaminopimelic acid, an essential component of bacterial cell walls. The protein is Succinyl-diaminopimelate desuccinylase of Klebsiella pneumoniae subsp. pneumoniae (strain ATCC 700721 / MGH 78578).